We begin with the raw amino-acid sequence, 455 residues long: tRNA modification GTPase MnmE (455 aa).

Arg-24, Glu-81, and Lys-120 together coordinate (6S)-5-formyl-5,6,7,8-tetrahydrofolate. The TrmE-type G domain maps to 216 to 378 (GMTVVIAGRP…LREHLKHCMG (163 aa)). A K(+)-binding site is contributed by Asn-226. Residues 226-231 (NAGKSS), 245-251 (TDIAGTT), 270-273 (DTAG), and 335-338 (NKAD) each bind GTP. Ser-230 contributes to the Mg(2+) binding site. K(+) contacts are provided by Thr-245, Ile-247, and Thr-250. Thr-251 lines the Mg(2+) pocket. Residue Lys-455 participates in (6S)-5-formyl-5,6,7,8-tetrahydrofolate binding.

This sequence belongs to the TRAFAC class TrmE-Era-EngA-EngB-Septin-like GTPase superfamily. TrmE GTPase family. Homodimer. Heterotetramer of two MnmE and two MnmG subunits. K(+) serves as cofactor.

It is found in the cytoplasm. Exhibits a very high intrinsic GTPase hydrolysis rate. Involved in the addition of a carboxymethylaminomethyl (cmnm) group at the wobble position (U34) of certain tRNAs, forming tRNA-cmnm(5)s(2)U34. This is tRNA modification GTPase MnmE from Stutzerimonas stutzeri (strain A1501) (Pseudomonas stutzeri).